Reading from the N-terminus, the 326-residue chain is Ras association domain-containing protein 2 (326 aa).

Positions 176 to 264 (YNHKTSVFTP…SKVFLMEKDQ (89 aa)) constitute a Ras-associating domain. The SARAH domain maps to 272–319 (VAQYIKFEMPVLKSFIQKLQEEEDREVEKLMQKYTVLRLMIRQRLEEI).

Interacts directly with activated KRAS in a GTP-dependent manner. Interacts (via SARAH domain) with STK3/MST2 and STK4/MST1. Post-translationally, phosphorylated by STK3/MST2 and STK4/MST1.

Its subcellular location is the nucleus. It is found in the cytoplasm. The protein localises to the chromosome. The protein resides in the centromere. It localises to the kinetochore. Its function is as follows. Potential tumor suppressor. Acts as a KRAS-specific effector protein. May promote apoptosis and cell cycle arrest. Stabilizes STK3/MST2 by protecting it from proteasomal degradation. The protein is Ras association domain-containing protein 2 (Rassf2) of Rattus norvegicus (Rat).